Here is a 1366-residue protein sequence, read N- to C-terminus: Collagen alpha-2(I) chain (1366 aa).

An N-terminal signal peptide occupies residues 1-22 (MLSFVDTRTLLLLAVTLCLATC). Gln23 carries the pyrrolidone carboxylic acid modification. The propeptide at 23 to 79 (QSLQEETVRKGPAGDRGPRGERGPPGPPGRDGEDGPTGPPGPPGPPGPPGLGGNFAA) is N-terminal propeptide. Basic and acidic residues predominate over residues 28-44 (ETVRKGPAGDRGPRGER). The disordered stretch occupies residues 28–1130 (ETVRKGPAGD…QPRSAPSLRP (1103 aa)). 4-hydroxyproline is present on residues Pro47, Pro50, Pro62, Pro65, Pro68, and Pro71. Pro residues predominate over residues 59–71 (TGPPGPPGPPGPP). Pyrrolidone carboxylic acid is present on Gln80. Lys84 carries the allysine modification. Gly residues predominate over residues 84–94 (KGVGLGPGPMG). Positions 95–140 (LMGPRGPPGAAGAPGPQGFQGPAGEPGEPGQTGPAGARGPAGPPGK) are enriched in low complexity. Pro102 and Pro108 each carry 4-hydroxyproline. The segment covering 141–155 (AGEDGHPGKPGRPGE) has biased composition (basic and acidic residues). A 5-hydroxylysine; alternate modification is found at Lys177. Residue Lys177 is glycosylated (O-linked (Gal...) hydroxylysine; alternate). Composition is skewed to low complexity over residues 225-254 (VGAP…SAGP), 269-293 (AVGN…LSGP), 300-321 (PGAN…AGAP), 330-345 (PGPV…RGLV), 398-410 (LRGS…LPGA), and 419-434 (PPGS…VRGP). 3 positions are modified to 4-hydroxyproline: Pro420, Pro441, and Pro444. Low complexity-rich tracts occupy residues 470-489 (LPGI…RGEP) and 513-531 (AGLA…NGAQ). Over residues 538–547 (GVQGGKGEQG) the composition is skewed to gly residues. Low complexity-rich tracts occupy residues 594-611 (PGES…SRGP), 623-648 (EPGV…RGAA), 663-710 (RGEI…PRGS), and 717-737 (VGPA…QPGA). A compositionally biased stretch (basic and acidic residues) spans 738 to 747 (KGERGAKGPK). The segment covering 752-765 (VVGPTGPVGAAGPA) has biased composition (low complexity). Over residues 775–784 (GSRGDGGPPG) the composition is skewed to gly residues. 5 stretches are compositionally biased toward low complexity: residues 786–795 (TGFPGAAGRT), 849–876 (SGEA…LGLP), 884–932 (LPGV…NPGN), 956–974 (PVGA…PAGK), and 983–1001 (PSGP…PSGP). Residues 1005–1016 (RGDKGEPGEKGP) show a composition bias toward basic and acidic residues. A compositionally biased stretch (pro residues) spans 1089 to 1101 (AGPPGPPGPPGPP). Positions 1120-1366 (DQPRSAPSLR…FVDIGPVCFK (247 aa)) are cleaved as a propeptide — C-terminal propeptide. The Fibrillar collagen NC1 domain occupies 1133 to 1366 (YEVDATLKSL…FVDIGPVCFK (234 aa)). Cystine bridges form between Cys1163–Cys1195, Cys1203–Cys1364, and Cys1272–Cys1317. Residues Asp1181, Asn1183, Gln1184, Cys1186, and Asp1189 each coordinate Ca(2+). An N-linked (GlcNAc...) asparagine glycan is attached at Asn1267.

Belongs to the fibrillar collagen family. In terms of assembly, trimers of one alpha 2(I) and two alpha 1(I) chains. Interacts (via C-terminus) with TMEM131 (via PapD-L domain); the interaction is direct and is involved in assembly and TRAPPIII ER-to-Golgi transport complex-dependent secretion of collagen. In terms of processing, prolines at the third position of the tripeptide repeating unit (G-X-Y) are hydroxylated in some or all of the chains. In terms of tissue distribution, forms the fibrils of tendon, ligaments and bones. In bones the fibrils are mineralized with calcium hydroxyapatite.

Its subcellular location is the secreted. The protein resides in the extracellular space. It localises to the extracellular matrix. Its function is as follows. Type I collagen is a member of group I collagen (fibrillar forming collagen). The polypeptide is Collagen alpha-2(I) chain (COL1A2) (Homo sapiens (Human)).